A 614-amino-acid chain; its full sequence is Membrane protein insertase YidC (614 aa).

The helical transmembrane segment at 6 to 26 (IVLLIIFSTSLLFLWDAWIKE) threads the bilayer. Polar residues-rich tracts occupy residues 34–48 (PAITQADSSAGSTQS) and 60–70 (ELTSSQASPDT). Residues 34–87 (PAITQADSSAGSTQSRNDDSLPVPGSELTSSQASPDTNGIPASGGNGDSVTPRL) are disordered. 4 consecutive transmembrane segments (helical) span residues 380 to 400 (WGVAIILLTMTVKLLFFPLSA), 450 to 470 (FPILVQIPVFIALYWTILAAV), 484 to 504 (LSSPDPFYMLPLLMGISMFVQ), and 524 to 544 (PVAFSAIFFFFPAGLVLYSLV). Positions 562–614 (TAPSKDTPEPPVSKQVNSSENPETTANSPADSPKQPQTPANNPRKMYKRTRKK) are disordered. A compositionally biased stretch (polar residues) spans 575–602 (KQVNSSENPETTANSPADSPKQPQTPAN).

The protein belongs to the OXA1/ALB3/YidC family. Type 1 subfamily. In terms of assembly, interacts with the Sec translocase complex via SecD. Specifically interacts with transmembrane segments of nascent integral membrane proteins during membrane integration.

It localises to the cell inner membrane. Its function is as follows. Required for the insertion and/or proper folding and/or complex formation of integral membrane proteins into the membrane. Involved in integration of membrane proteins that insert both dependently and independently of the Sec translocase complex, as well as at least some lipoproteins. Aids folding of multispanning membrane proteins. The sequence is that of Membrane protein insertase YidC from Nitrosomonas europaea (strain ATCC 19718 / CIP 103999 / KCTC 2705 / NBRC 14298).